The sequence spans 461 residues: Arginine biosynthesis bifunctional protein ArgJ, chloroplastic (461 aa).

Thr202, Lys228, Thr239, Glu326, Asn456, and Thr461 together coordinate substrate. The active-site Nucleophile is the Thr239.

The protein belongs to the ArgJ family. As to quaternary structure, heterodimer of an alpha and a beta chain.

It is found in the plastid. The protein localises to the chloroplast. The catalysed reaction is N(2)-acetyl-L-ornithine + L-glutamate = N-acetyl-L-glutamate + L-ornithine. It catalyses the reaction L-glutamate + acetyl-CoA = N-acetyl-L-glutamate + CoA + H(+). The protein operates within amino-acid biosynthesis; L-arginine biosynthesis; L-ornithine and N-acetyl-L-glutamate from L-glutamate and N(2)-acetyl-L-ornithine (cyclic): step 1/1. It functions in the pathway amino-acid biosynthesis; L-arginine biosynthesis; N(2)-acetyl-L-ornithine from L-glutamate: step 1/4. In terms of biological role, catalyzes two activities which are involved in the cyclic version of arginine biosynthesis: the synthesis of acetylglutamate from glutamate and acetyl-CoA, and of ornithine by transacetylation between acetylornithine and glutamate. The sequence is that of Arginine biosynthesis bifunctional protein ArgJ, chloroplastic from Ostreococcus lucimarinus (strain CCE9901).